A 179-amino-acid polypeptide reads, in one-letter code: ATP synthase subunit b, chloroplastic (179 aa).

The helical transmembrane segment at 28-46 (IINIAALVGILIYAGRDFL) threads the bilayer.

This sequence belongs to the ATPase B chain family. As to quaternary structure, F-type ATPases have 2 components, F(1) - the catalytic core - and F(0) - the membrane proton channel. F(1) has five subunits: alpha(3), beta(3), gamma(1), delta(1), epsilon(1). F(0) has four main subunits: a(1), b(1), b'(1) and c(10-14). The alpha and beta chains form an alternating ring which encloses part of the gamma chain. F(1) is attached to F(0) by a central stalk formed by the gamma and epsilon chains, while a peripheral stalk is formed by the delta, b and b' chains.

Its subcellular location is the plastid. The protein localises to the chloroplast thylakoid membrane. Functionally, f(1)F(0) ATP synthase produces ATP from ADP in the presence of a proton or sodium gradient. F-type ATPases consist of two structural domains, F(1) containing the extramembraneous catalytic core and F(0) containing the membrane proton channel, linked together by a central stalk and a peripheral stalk. During catalysis, ATP synthesis in the catalytic domain of F(1) is coupled via a rotary mechanism of the central stalk subunits to proton translocation. Its function is as follows. Component of the F(0) channel, it forms part of the peripheral stalk, linking F(1) to F(0). The chain is ATP synthase subunit b, chloroplastic from Trieres chinensis (Marine centric diatom).